Consider the following 360-residue polypeptide: Amine dehydrogenase (360 aa).

This sequence belongs to the amine dehydrogenase family. In terms of assembly, homodimer.

The enzyme catalyses a secondary alkyl amine + NAD(+) + H2O = a ketone + NH4(+) + NADH + H(+). It carries out the reaction a secondary alkyl amine + NADP(+) + H2O = a ketone + NH4(+) + NADPH + H(+). It catalyses the reaction serinol + NAD(+) + H2O = dihydroxyacetone + NH4(+) + NADH + H(+). The catalysed reaction is serinol + NADP(+) + H2O = dihydroxyacetone + NH4(+) + NADPH + H(+). The enzyme catalyses 2-aminopropan-1-ol + NAD(+) + H2O = hydroxyacetone + NH4(+) + NADH + H(+). It carries out the reaction (R)-1-phenylethylamine + NAD(+) + H2O = acetophenone + NH4(+) + NADH + H(+). It catalyses the reaction (S)-1-phenylethylamine + NAD(+) + H2O = acetophenone + NH4(+) + NADH + H(+). The catalysed reaction is (2S)-2-aminobutan-1-ol + NAD(+) + H2O = 1-hydroxy-2-butanone + NH4(+) + NADH + H(+). The enzyme catalyses (2S)-2-amino-3-methylbutan-1-ol + NAD(+) + H2O = 1-hydroxy-3-methylbutan-2-one + NH4(+) + NADH + H(+). It carries out the reaction 2-aminopentan-1-ol + NAD(+) + H2O = 1-hydroxypentan-2-one + NH4(+) + NADH + H(+). It catalyses the reaction (S)-leucinol + NAD(+) + H2O = 1-hydroxy-4-methylpentan-2-one + NH4(+) + NADH + H(+). The catalysed reaction is (S)-isoleucinol + NAD(+) + H2O = (3S)-1-hydroxy-3-methylpentan-2-one + NH4(+) + NADH + H(+). The enzyme catalyses (S)-methioninol + NAD(+) + H2O = 1-hydroxy-4-(methythio)butan-2-one + NH4(+) + NADH + H(+). It carries out the reaction 2-aminocyclohexanol + NAD(+) + H2O = 2-hydroxycyclohexan-1-one + NH4(+) + NADH + H(+). It catalyses the reaction L-alanine + NAD(+) + H2O = pyruvate + NH4(+) + NADH + H(+). The catalysed reaction is D-alanine + NAD(+) + H2O = pyruvate + NH4(+) + NADH + H(+). The enzyme catalyses L-aspartate + NAD(+) + H2O = oxaloacetate + NH4(+) + NADH + H(+). It carries out the reaction D-aspartate + NAD(+) + H2O = oxaloacetate + NH4(+) + NADH + H(+). It catalyses the reaction L-glutamate + NAD(+) + H2O = 2-oxoglutarate + NH4(+) + NADH + H(+). The catalysed reaction is D-glutamate + NAD(+) + H2O = 2-oxoglutarate + NH4(+) + NADH + H(+). The enzyme catalyses L-serine + NAD(+) + H2O = 3-hydroxypyruvate + NH4(+) + NADH + H(+). It carries out the reaction D-serine + NAD(+) + H2O = 3-hydroxypyruvate + NH4(+) + NADH + H(+). It catalyses the reaction methylamine + NAD(+) + H2O = formaldehyde + NH4(+) + NADH + H(+). The catalysed reaction is ethylamine + NAD(+) + H2O = acetaldehyde + NH4(+) + NADH + H(+). The enzyme catalyses propylamine + NAD(+) + H2O = propanal + NH4(+) + NADH + H(+). It carries out the reaction butylamine + NAD(+) + H2O = butanal + NH4(+) + NADH + H(+). It catalyses the reaction hexylamine + NAD(+) + H2O = hexanal + NH4(+) + NADH + H(+). The catalysed reaction is octylamine + NAD(+) + H2O = octanal + NH4(+) + NADH + H(+). The enzyme catalyses (R)-sec-butylamine + NAD(+) + H2O = butan-2-one + NH4(+) + NADH + H(+). It carries out the reaction (S)-sec-butylamine + NAD(+) + H2O = butan-2-one + NH4(+) + NADH + H(+). It catalyses the reaction 2-aminopentane + NAD(+) + H2O = pentan-2-one + NH4(+) + NADH + H(+). The catalysed reaction is 3-aminopentane + NAD(+) + H2O = pentan-3-one + NH4(+) + NADH + H(+). The enzyme catalyses (2R)-heptan-2-amine + NAD(+) + H2O = heptan-2-one + NH4(+) + NADH + H(+). It carries out the reaction (2S)-heptan-2-amine + NAD(+) + H2O = heptan-2-one + NH4(+) + NADH + H(+). It catalyses the reaction benzylamine + NAD(+) + H2O = benzaldehyde + NH4(+) + NADH + H(+). The catalysed reaction is 3-aminobutan-2-ol + NAD(+) + H2O = acetoin + NH4(+) + NADH + H(+). The enzyme catalyses 3-aminobutan-1-ol + NAD(+) + H2O = 4-hydroxybutan-2-one + NH4(+) + NADH + H(+). It carries out the reaction 5-hydroxypentan-2-amine + NAD(+) + H2O = 5-hydroxypentan-2-one + NH4(+) + NADH + H(+). It catalyses the reaction 4-hydroxyhexan-3-amine + NAD(+) + H2O = 4-hydroxyhexan-3-one + NH4(+) + NADH + H(+). The catalysed reaction is 5-hydroxyoctan-4-amine + NAD(+) + H2O = 5-hydroxyoctan-4-one + NH4(+) + NADH + H(+). The enzyme catalyses 2-hydroxy-1-phenylethan-1-amine + NAD(+) + H2O = 2-hydroxyacetophenone + NH4(+) + NADH + H(+). It carries out the reaction hexan-2-amine + NAD(+) + H2O = hexan-2-one + NH4(+) + NADH + H(+). It catalyses the reaction 4-phenylbutan-2-amine + NAD(+) + H2O = 4-phenylbutan-2-one + NH4(+) + NADH + H(+). Its function is as follows. Catalyzes the reversible oxidative deaminations of a broad range of amines, amino alcohols and amino acids. Catalyzes the reversible dehydrogenation of serinol in the presence of NAD(+) to give dihydroxyacetone, ammonium ion and NADH, while NADP(+) shows a slight activity. Is also able to produce 2-amino-1-propanol and aspartate by the reductive amination of the corresponding keto alcohol (hydroxyacetone) and keto acid (oxaloacetate) in the presence of ammonium ions and NADH, and that of acetophenone from phenylethylamine by the oxidative deamination in the presence of NAD(+). The sequence is that of Amine dehydrogenase from Streptomyces virginiae (Streptomyces cinnamonensis).